A 90-amino-acid polypeptide reads, in one-letter code: Acylphosphatase (90 aa).

Residues 5-90 (GCKVIVSGIV…YQKTNDFIAC (86 aa)) form the Acylphosphatase-like domain. Active-site residues include arginine 20 and asparagine 38.

It belongs to the acylphosphatase family.

It catalyses the reaction an acyl phosphate + H2O = a carboxylate + phosphate + H(+). The protein is Acylphosphatase (acyP) of Psychromonas ingrahamii (strain DSM 17664 / CCUG 51855 / 37).